The chain runs to 291 residues: 3-hydroxy-5-phosphonooxypentane-2,4-dione thiolase (291 aa).

Residue lysine 203 is the Schiff-base intermediate with substrate of the active site.

The protein belongs to the DeoC/FbaB aldolase family. As to quaternary structure, homodecamer.

The protein resides in the cytoplasm. The enzyme catalyses dihydroxyacetone phosphate + acetyl-CoA = 3-hydroxy-2,4-dioxopentyl phosphate + CoA. Involved in the degradation of phospho-AI-2, thereby terminating induction of the lsr operon and closing the AI-2 signaling cycle. Catalyzes the transfer of an acetyl moiety from 3-hydroxy-5-phosphonooxypentane-2,4-dione to CoA to form glycerone phosphate and acetyl-CoA. The protein is 3-hydroxy-5-phosphonooxypentane-2,4-dione thiolase of Salmonella paratyphi A (strain ATCC 9150 / SARB42).